The following is a 77-amino-acid chain: Sec-independent protein translocase protein TatA (77 aa).

The helical transmembrane segment at 1–21 threads the bilayer; it reads MGSFSIWHWLIVLVIVMLVFG. The tract at residues 40–77 is disordered; sequence KDGMKEGNTDEPATPTPAKELRDSTTIDVEAKEKSRQQ. The segment covering 58 to 77 has biased composition (basic and acidic residues); the sequence is KELRDSTTIDVEAKEKSRQQ.

The protein belongs to the TatA/E family. The Tat system comprises two distinct complexes: a TatABC complex, containing multiple copies of TatA, TatB and TatC subunits, and a separate TatA complex, containing only TatA subunits. Substrates initially bind to the TatABC complex, which probably triggers association of the separate TatA complex to form the active translocon.

The protein resides in the cell inner membrane. Its function is as follows. Part of the twin-arginine translocation (Tat) system that transports large folded proteins containing a characteristic twin-arginine motif in their signal peptide across membranes. TatA could form the protein-conducting channel of the Tat system. The sequence is that of Sec-independent protein translocase protein TatA from Cupriavidus metallidurans (strain ATCC 43123 / DSM 2839 / NBRC 102507 / CH34) (Ralstonia metallidurans).